The following is a 528-amino-acid chain: Peptide chain release factor 3 (528 aa).

The tr-type G domain occupies 10–278 (DRRRTFGIIS…AFVQMAPPPH (269 aa)). GTP contacts are provided by residues 19 to 26 (SHPDAGKT), 87 to 91 (DTPGH), and 141 to 144 (NKLD).

Belongs to the TRAFAC class translation factor GTPase superfamily. Classic translation factor GTPase family. PrfC subfamily.

The protein resides in the cytoplasm. Increases the formation of ribosomal termination complexes and stimulates activities of RF-1 and RF-2. It binds guanine nucleotides and has strong preference for UGA stop codons. It may interact directly with the ribosome. The stimulation of RF-1 and RF-2 is significantly reduced by GTP and GDP, but not by GMP. The protein is Peptide chain release factor 3 of Syntrophobacter fumaroxidans (strain DSM 10017 / MPOB).